A 232-amino-acid chain; its full sequence is MTNDNSGIWVLGYGSLIYKPPSHYTHRIPAIIHGFARRFWQSSTDHRGTPANPGRVATLIPYEDIIRQTAFLKNVNLYSESAPIQDPDDLVTIGVVYYIPPEHAQEVREYLNVREQNGYTLHEVEVHLETNREHEAELGEALEQLPRHNKSGKRVLLTSVYIGTIDNEAFVGPETVDETAKVIAVSHGPSGSNYEYLAKLEQALAQMPIMKERGRITDHYLTALLETVNKYR.

Residue 10-15 participates in substrate binding; it reads VLGYGS. Glutamate 115 serves as the catalytic Proton acceptor.

This sequence belongs to the gamma-glutamylcyclotransferase family. ChaC subfamily.

It localises to the cytoplasm. Its subcellular location is the nucleus. It carries out the reaction glutathione = L-cysteinylglycine + 5-oxo-L-proline. Catalyzes the cleavage of glutathione into 5-oxo-L-proline and a Cys-Gly dipeptide. Acts specifically on glutathione, but not on other gamma-glutamyl peptides. Allows utilization of gluthathione through subsequent cleavage of the Cys-Gly dipeptide by Cys-Gly metallodipeptidase DUG1. The protein is Glutathione-specific gamma-glutamylcyclotransferase of Saccharomyces cerevisiae (strain ATCC 204508 / S288c) (Baker's yeast).